The sequence spans 525 residues: GMP synthase [glutamine-hydrolyzing] (525 aa).

The region spanning 9–207 (RVLILDFGSQ…VLEIAGCEPL (199 aa)) is the Glutamine amidotransferase type-1 domain. Residue Cys-86 is the Nucleophile of the active site. Active-site residues include His-181 and Glu-183. The region spanning 208–400 (WTPANIVEDA…LGLPYDMVYR (193 aa)) is the GMPS ATP-PPase domain. 235-241 (SGGVDSS) contacts ATP.

Homodimer.

The catalysed reaction is XMP + L-glutamine + ATP + H2O = GMP + L-glutamate + AMP + diphosphate + 2 H(+). Its pathway is purine metabolism; GMP biosynthesis; GMP from XMP (L-Gln route): step 1/1. Catalyzes the synthesis of GMP from XMP. The sequence is that of GMP synthase [glutamine-hydrolyzing] from Teredinibacter turnerae (strain ATCC 39867 / T7901).